Here is a 178-residue protein sequence, read N- to C-terminus: Caveolin-1 (178 aa).

N-acetylserine is present on serine 2. A Phosphoserine modification is found at serine 2. Residues 2 to 94 (SGGKYVDSEG…WKASFTTFTV (93 aa)) form a required for homooligomerization region. The Cytoplasmic portion of the chain corresponds to 2-104 (SGGKYVDSEG…TKYWFYRLLS (103 aa)). Lysine 5 carries the N6-acetyllysine; alternate modification. Residue lysine 5 forms a Glycyl lysine isopeptide (Lys-Gly) (interchain with G-Cter in ubiquitin); alternate linkage. Tyrosine 6 bears the Phosphotyrosine mark. A Phosphoserine modification is found at serine 9. Tyrosine 14 is modified (phosphotyrosine; by ABL1). Residue tyrosine 25 is modified to Phosphotyrosine. Residues lysine 26, lysine 30, lysine 39, lysine 47, and lysine 57 each participate in a glycyl lysine isopeptide (Lys-Gly) (interchain with G-Cter in ubiquitin) cross-link. An interaction with CAVIN3 region spans residues 82–94 (DGIWKASFTTFTV). The helical intramembrane region spans 105 to 125 (ALFGIPMALIWGIYFAILSFL). Residues 126-178 (HIWAVVPCIKSFLIEIQCISRVYSIYVHTFCDPFFEAVGKIFSNIRINMQKEI) lie on the Cytoplasmic side of the membrane. The segment at 131-142 (VPCIKSFLIEIQ) is interacts with SPRY1, SPRY2, SPRY3 and SPRY4. Residues cysteine 133, cysteine 143, and cysteine 156 are each lipidated (S-palmitoyl cysteine). The tract at residues 149–160 (SIYVHTFCDPFF) is interacts with SPRY1, SPRY2, and SPRY4. The interacts with SPRY1, SPRY2, SPRY3 and SPRY4 stretch occupies residues 167–178 (FSNIRINMQKEI).

It belongs to the caveolin family. In terms of assembly, homooligomer. Interacts with GLIPR2. Interacts with NOSTRIN. Interacts with SNAP25 and STX1A. Interacts (via the N-terminus) with DPP4; the interaction is direct. Interacts with CTNNB1, CDH1 and JUP. Interacts with PACSIN2; this interaction induces membrane tubulation. Interacts with SLC7A9. Interacts with BMX and BTK. Interacts with TGFBR1. Interacts with CAVIN3 (via leucine-zipper domain) in a cholesterol-sensitive manner. Interacts with CAVIN1. Interacts with EHD2 in a cholesterol-dependent manner. Forms a ternary complex with UBXN6 and VCP; mediates CAV1 targeting to lysosomes for degradation. Interacts with ABCG1; this interaction regulates ABCG1-mediated cholesterol efflux. Interacts with NEU3; this interaction enhances NEU3 sialidase activity within caveola. Interacts (via C-terminus) with SPRY1, SPRY2 (via C-terminus), SPRY3, and SPRY4. Interacts with IGFBP5; this interaction allows trafficking of IGFBP5 from the plasma membrane to the nucleus. Phosphorylated at Tyr-14 by ABL1 in response to oxidative stress. In terms of processing, ubiquitinated. Undergo monoubiquitination and multi- and/or polyubiquitination. Monoubiquitination of N-terminal lysines promotes integration in a ternary complex with UBXN6 and VCP which promotes oligomeric CAV1 targeting to lysosomes for degradation. Ubiquitinated by ZNRF1; leading to degradation and modulation of the TLR4-mediated immune response.

It localises to the golgi apparatus membrane. Its subcellular location is the cell membrane. It is found in the membrane. The protein resides in the caveola. The protein localises to the membrane raft. Functionally, may act as a scaffolding protein within caveolar membranes. Forms a stable heterooligomeric complex with CAV2 that targets to lipid rafts and drives caveolae formation. Mediates the recruitment of CAVIN proteins (CAVIN1/2/3/4) to the caveolae. Interacts directly with G-protein alpha subunits and can functionally regulate their activity. Involved in the costimulatory signal essential for T-cell receptor (TCR)-mediated T-cell activation. Its binding to DPP4 induces T-cell proliferation and NF-kappa-B activation in a T-cell receptor/CD3-dependent manner. Recruits CTNNB1 to caveolar membranes and may regulate CTNNB1-mediated signaling through the Wnt pathway. Negatively regulates TGFB1-mediated activation of SMAD2/3 by mediating the internalization of TGFBR1 from membrane rafts leading to its subsequent degradation. Binds 20(S)-hydroxycholesterol (20(S)-OHC). This is Caveolin-1 (CAV1) from Felis catus (Cat).